The primary structure comprises 464 residues: GTPase Der (464 aa).

EngA-type G domains follow at residues 3–166 (PVIA…PEVE) and 178–351 (IRIA…DSAF). Residues 9–16 (GRPNVGKS), 56–60 (DTGGL), 118–121 (NKTD), 184–191 (GRPNAGKS), 231–235 (DTAGV), and 296–299 (NKWD) contribute to the GTP site. One can recognise a KH-like domain in the interval 352–436 (IKVSTNHLTK…PIRLEFKTGE (85 aa)).

It belongs to the TRAFAC class TrmE-Era-EngA-EngB-Septin-like GTPase superfamily. EngA (Der) GTPase family. Associates with the 50S ribosomal subunit.

Functionally, GTPase that plays an essential role in the late steps of ribosome biogenesis. The chain is GTPase Der from Thioalkalivibrio sulfidiphilus (strain HL-EbGR7).